The following is a 364-amino-acid chain: Aminomethyltransferase (364 aa).

Belongs to the GcvT family. As to quaternary structure, the glycine cleavage system is composed of four proteins: P, T, L and H.

The enzyme catalyses N(6)-[(R)-S(8)-aminomethyldihydrolipoyl]-L-lysyl-[protein] + (6S)-5,6,7,8-tetrahydrofolate = N(6)-[(R)-dihydrolipoyl]-L-lysyl-[protein] + (6R)-5,10-methylene-5,6,7,8-tetrahydrofolate + NH4(+). In terms of biological role, the glycine cleavage system catalyzes the degradation of glycine. The polypeptide is Aminomethyltransferase (Salmonella dublin (strain CT_02021853)).